The chain runs to 418 residues: Deubiquitinase and deneddylase Dub1 (418 aa).

Over residues 1–10 the composition is skewed to polar residues; sequence MLSPTNSTSK. The disordered stretch occupies residues 1 to 23; that stretch reads MLSPTNSTSKKAPVPPQDSSKPV. The chain crosses the membrane as a helical span at residues 40–60; the sequence is TALAVLLVVVTLGLILLFYSF. The tract at residues 72–143 is disordered; sequence TRPSTKEQPT…PPLPPKAPKP (72 aa). A compositionally biased stretch (pro residues) spans 86–141; sequence VPLPSPPLAVPRPSTPPPPVISRPSTPPAPTPAISPPSTPSAPKPSTPPPLPPKAP. Residues histidine 288, aspartate 305, and cysteine 358 contribute to the active site.

The protein belongs to the peptidase C48 family.

Its subcellular location is the secreted. The protein resides in the host cell. It localises to the membrane. Effector proteins function to alter host cell physiology and promote bacterial survival in host tissues. This protease possesses deubiquitinating and deneddylating activities. In Chlamydia trachomatis serovar D (strain ATCC VR-885 / DSM 19411 / UW-3/Cx), this protein is Deubiquitinase and deneddylase Dub1 (cdu1).